The following is a 256-amino-acid chain: uncharacterized protein (256 aa).

The N-terminal stretch at 1-24 (MIKRVNKLVLGISFLFLIISIFAG) is a signal peptide. Cysteine 25 is lipidated: N-palmitoyl cysteine. A lipid anchor (S-diacylglycerol cysteine) is attached at cysteine 25.

The protein belongs to the staphylococcal tandem lipoprotein family.

It localises to the cell membrane. This is an uncharacterized protein from Staphylococcus aureus (strain Mu50 / ATCC 700699).